The chain runs to 110 residues: Cytochrome c oxidase subunit 4B (110 aa).

The next 3 helical transmembrane spans lie at 29-49 (MIAF…VGYE), 55-75 (FVVP…LYYF), and 89-109 (FIYG…TVVW).

Belongs to the cytochrome c oxidase bacterial subunit 4 family.

The protein resides in the cell membrane. The enzyme catalyses 4 Fe(II)-[cytochrome c] + O2 + 8 H(+)(in) = 4 Fe(III)-[cytochrome c] + 2 H2O + 4 H(+)(out). This is Cytochrome c oxidase subunit 4B (caaD) from Bacillus sp. (strain PS3).